Consider the following 128-residue polypeptide: Fumarate reductase subunit C (128 aa).

A run of 3 helical transmembrane segments spans residues 31 to 51 (ATCI…ISLG), 67 to 87 (VVIL…TLYV), and 106 to 126 (ILKN…LVLV).

This sequence belongs to the FrdC family. As to quaternary structure, part of an enzyme complex containing four subunits: a flavoprotein (FrdA), an iron-sulfur protein (FrdB), and two hydrophobic anchor proteins (FrdC and FrdD).

Its subcellular location is the cell inner membrane. Anchors the catalytic components of the fumarate reductase complex to the cell membrane, binds quinones. The polypeptide is Fumarate reductase subunit C (Haemophilus ducreyi (strain 35000HP / ATCC 700724)).